A 413-amino-acid polypeptide reads, in one-letter code: Protein trichome birefringence-like 31 (413 aa).

Residues 12–34 form a helical; Signal-anchor for type II membrane protein membrane-spanning segment; it reads IQSIFQVVLVSLLVLGSVRWILD. A GDS motif motif is present at residues 141–143; it reads GDS. The DCXHWCLPGXXDXWN motif signature appears at 384–398; the sequence is DCIHWCLPGVPDTWN.

Belongs to the PC-esterase family. TBL subfamily.

Its subcellular location is the membrane. Its function is as follows. May act as a bridging protein that binds pectin and other cell wall polysaccharides. Probably involved in maintaining esterification of pectins. May be involved in the specific O-acetylation of cell wall polymers. This is Protein trichome birefringence-like 31 (TBL31) from Arabidopsis thaliana (Mouse-ear cress).